Reading from the N-terminus, the 405-residue chain is Eukaryotic translation initiation factor 5 (405 aa).

27 to 34 (GRGNGIKT) lines the GTP pocket. Positions 143 to 202 (NPPDSVSGSKKKKKAATASANVRGGGLSISDIAQGKSQNAPSDGTGSSTPQHHDEDEDEL) are disordered. Ser-170 and Ser-172 each carry phosphoserine. Positions 177-192 (GKSQNAPSDGTGSSTP) are enriched in polar residues. Thr-191 is modified (phosphothreonine). Ser-228 is modified (phosphoserine). A W2 domain is found at 241–402 (VNSELTQLDE…ETAESDDDEE (162 aa)). Thr-317 is modified (phosphothreonine). Ser-397 carries the phosphoserine modification.

This sequence belongs to the eIF-2-beta/eIF-5 family. In terms of assembly, monomer. The factors eIF-1, eIF-2, eIF-3, TIF5/eIF-5 and methionyl-tRNAi form a multifactor complex (MFC) that may bind to the 40S ribosome. TIF32, NIP1 and TIF5/eIF-5 comprise a minimal 40S-ribosome-binding unit. Interacts with NIP1. Interacts with SUI3.

In terms of biological role, catalyzes the hydrolysis of GTP bound to the 40S ribosomal initiation complex (40S.mRNA.Met-tRNA[F].eIF-2.GTP) with the subsequent joining of a 60S ribosomal subunit resulting in the release of eIF-2 and the guanine nucleotide. The subsequent joining of a 60S ribosomal subunit results in the formation of a functional 80S initiation complex (80S.mRNA.Met-tRNA[F]). eIF-5 is essential for cell viability. This chain is Eukaryotic translation initiation factor 5 (TIF5), found in Saccharomyces cerevisiae (strain ATCC 204508 / S288c) (Baker's yeast).